The following is a 279-amino-acid chain: HTH-type transcriptional activator RhaS (279 aa).

Positions 175–273 (QALLGWLQNN…SQAPKSLRHQ (99 aa)) constitute an HTH araC/xylS-type domain. 2 DNA-binding regions (H-T-H motif) span residues 192–213 (GGLADQFSLPLRTLHRQLKQHT) and 240–263 (ITTIAHACGFSDSNHFSTQFRKAF).

In terms of assembly, binds DNA as a dimer.

The protein localises to the cytoplasm. In terms of biological role, activates expression of the rhaBAD and rhaT operons. The chain is HTH-type transcriptional activator RhaS from Pectobacterium atrosepticum (strain SCRI 1043 / ATCC BAA-672) (Erwinia carotovora subsp. atroseptica).